A 370-amino-acid polypeptide reads, in one-letter code: D-alanine--D-alanine ligase (370 aa).

The ATP-grasp domain maps to 144 to 352 (KKIFADAGIP…YSALIERLVD (209 aa)). 177 to 232 (EEVLTYPVFVKPANLGSSVGISKATNKKELEDAMTEAFLYDRRVVVEQGVVAREIE) provides a ligand contact to ATP. Residues D306, E319, and N321 each coordinate Mg(2+).

This sequence belongs to the D-alanine--D-alanine ligase family. The cofactor is Mg(2+). Mn(2+) serves as cofactor.

The protein resides in the cytoplasm. It carries out the reaction 2 D-alanine + ATP = D-alanyl-D-alanine + ADP + phosphate + H(+). The protein operates within cell wall biogenesis; peptidoglycan biosynthesis. In terms of biological role, cell wall formation. In Listeria welshimeri serovar 6b (strain ATCC 35897 / DSM 20650 / CCUG 15529 / CIP 8149 / NCTC 11857 / SLCC 5334 / V8), this protein is D-alanine--D-alanine ligase.